We begin with the raw amino-acid sequence, 217 residues long: Cytochrome b5 domain-containing protein 1 (217 aa).

The Cytochrome b5 heme-binding domain occupies 6–72 (PRYFTPREVS…NPKTGDVKTH (67 aa)). 2 residues coordinate heme: histidine 41 and histidine 72.

Belongs to the cytochrome b5 family.

It localises to the cytoplasm. The protein localises to the cytoskeleton. It is found in the cilium axoneme. Functionally, radial spoke stalk protein that binds heme under oxidizing conditions. Required for the coordinated beating of multiple cilia maybe by functioning in a redox signaling pathway. The sequence is that of Cytochrome b5 domain-containing protein 1 (cyb5d1) from Xenopus laevis (African clawed frog).